Consider the following 462-residue polypeptide: MGKFITTTLSPPLYARSKLLCFSLLYLFSTIFLFLYVSLSRNQCIFRYSPFDPIQAKLFSYPSSYGEHKYALPTHRSSCSSPIFFSDYWTVLKEIQSILSGSSPKENLRYINGKSESFGGNFSTQKRFSYFNHSNIDVEVPCGFFRDFPVSNSDRVEMEKCGLVVASAIFNDHDKIRQPVGLGVKTLETVCFYMFIDDKTLNSLFHHNVILKNNPSDYRVGAWRIIKISKSENLYLNPAMNGVIPKYLIHRLFPNSKFSIWVDAKIQLMIDPLLLIHSMLVVPEVDMAISKHPFFVNTMEEAMATARWKKWGDVDGLRIQMETYCEHGLKPWSSSKLPYPTDVPDTALILRRHGIRSNLFSCFMFNELEAFNPRDQLAFAFVRDHINPKVKMNMFEVEVFEQVVVEYRHNLKKIESSTYEEQEEEQKQESLRTIQKRRKWLDHESWSLNRSSCKNYLTDMWG.

The Cytoplasmic portion of the chain corresponds to 1-18 (MGKFITTTLSPPLYARSK). Residues 19–39 (LLCFSLLYLFSTIFLFLYVSL) form a helical membrane-spanning segment. The Lumenal segment spans residues 40–462 (SRNQCIFRYS…CKNYLTDMWG (423 aa)). Residues asparagine 121, asparagine 132, and asparagine 449 are each glycosylated (N-linked (GlcNAc...) asparagine).

Belongs to the alkaline ceramidase family. As to expression, preferentially expressed in pollen grains, pollen tubes and silique guard cells, but barely detectable in roots, stems and leaves.

It is found in the golgi apparatus membrane. The enzyme catalyses an N-acylsphing-4-enine + H2O = sphing-4-enine + a fatty acid. It functions in the pathway lipid metabolism. Endoplasmic reticulum ceramidase that catalyzes the hydrolysis of ceramides into sphingosine and free fatty acids at alkaline pH (e.g. pH 9.5). Inactive on phytoceramide. Involved in the regulation of turgor pressure in guard cells and pollen tubes. The protein is Alkaline ceramidase TOD1 of Arabidopsis thaliana (Mouse-ear cress).